The chain runs to 1079 residues: BRD4-interacting chromatin-remodeling complex-associated protein-like (1079 aa).

Disordered stretches follow at residues 51-79 (NSSN…LPLS) and 509-604 (LHLS…TPGT). The span at 68–79 (LGEGPSDGLPLS) shows a compositional bias: low complexity. A compositionally biased stretch (polar residues) spans 544–576 (SSASTAHPSLGSAVQSGSSGSNFTGDQLTQPNR). Over residues 590-604 (SSSKSTSTFSNTPGT) the composition is skewed to low complexity. Residue serine 623 is modified to Phosphoserine. Disordered stretches follow at residues 669-691 (EKVV…GGQK), 837-877 (TQFG…NHDQ), and 917-954 (TSEE…TESK). Basic and acidic residues-rich tracts occupy residues 918–928 (SEEKASRREPL) and 938–952 (EGHR…HGTE). Phosphoserine is present on serine 980.

Component of the multiprotein chromatin-remodeling complexes SWI/SNF: SWI/SNF-A (BAF), SWI/SNF-B (PBAF) and related complexes. The canonical complex contains a catalytic subunit (either SMARCA4/BRG1/BAF190A or SMARCA2/BRM/BAF190B) and at least SMARCE1, ACTL6A/BAF53, SMARCC1/BAF155, SMARCC2/BAF170, and SMARCB1/SNF5/BAF47. Other subunits specific to each of the complexes may also be present permitting several possible combinations developmentally and tissue specific. Component of the SWI/SNF (GBAF) subcomplex, which includes at least BICRA or BICRAL (mutually exclusive), BRD9, SS18, the core BAF subunits, SMARCA2/BRM, SMARCA4/BRG1/BAF190A, ACTL6A/BAF53, SMARCC1/BAF155, and SMARCD1/BAF60A.

Its function is as follows. Component of SWI/SNF chromatin remodeling subcomplex GBAF that carries out key enzymatic activities, changing chromatin structure by altering DNA-histone contacts within a nucleosome in an ATP-dependent manner. The sequence is that of BRD4-interacting chromatin-remodeling complex-associated protein-like from Homo sapiens (Human).